Reading from the N-terminus, the 184-residue chain is Tumor necrosis factor receptor superfamily member 13C (184 aa).

Topologically, residues 1–78 (MRRGPRSLRG…EAALPLPGLL (78 aa)) are extracellular. A TNFR-Cys; truncated repeat occupies 18–35 (PCVPAECFDLLVRHCVAC). 2 disulfides stabilise this stretch: Cys-19–Cys-32 and Cys-24–Cys-35. Residues 26–31 (DLLVRH) are essential for TNFSF13B/TALL1/BAFF/BLyS binding. The interval 43–62 (PKPAGASSPAPRTALQPQES) is disordered. The helical; Signal-anchor for type III membrane protein transmembrane segment at 79 to 99 (FGAPALLGLALVLALVLVGLV) threads the bilayer. The Cytoplasmic portion of the chain corresponds to 100–184 (SWRRRQRRLR…TTKTAGPEQQ (85 aa)). The segment at 107-184 (RLRGASSAEA…TTKTAGPEQQ (78 aa)) is disordered. Residues 118-128 (DGDKDAPEPLD) are compositionally biased toward basic and acidic residues. Over residues 168-184 (LGSTELVTTKTAGPEQQ) the composition is skewed to polar residues.

As to expression, highly expressed in spleen and lymph node, and in resting B-cells. Detected at lower levels in activated B-cells, resting CD4+ T-cells, in thymus and peripheral blood leukocytes.

The protein resides in the membrane. B-cell receptor specific for TNFSF13B/TALL1/BAFF/BLyS. Promotes the survival of mature B-cells and the B-cell response. This is Tumor necrosis factor receptor superfamily member 13C (TNFRSF13C) from Homo sapiens (Human).